The chain runs to 759 residues: 1,4-alpha-glucan branching enzyme GlgB (759 aa).

Catalysis depends on Asp431, which acts as the Nucleophile. Glu484 acts as the Proton donor in catalysis.

It belongs to the glycosyl hydrolase 13 family. GlgB subfamily. As to quaternary structure, monomer.

The enzyme catalyses Transfers a segment of a (1-&gt;4)-alpha-D-glucan chain to a primary hydroxy group in a similar glucan chain.. It functions in the pathway glycan biosynthesis; glycogen biosynthesis. Its function is as follows. Catalyzes the formation of the alpha-1,6-glucosidic linkages in glycogen by scission of a 1,4-alpha-linked oligosaccharide from growing alpha-1,4-glucan chains and the subsequent attachment of the oligosaccharide to the alpha-1,6 position. In Prochlorococcus marinus (strain MIT 9211), this protein is 1,4-alpha-glucan branching enzyme GlgB.